The sequence spans 292 residues: Imipenem-hydrolyzing beta-lactamase (292 aa).

A signal peptide spans 1–27; sequence MSLNVKQSRIAILFSSCLISISFFSQA. A disulfide bond links Cys-70 and Cys-240. The active-site Acyl-ester intermediate is Ser-71. 236–238 serves as a coordination point for substrate; it reads KTG.

It belongs to the class-A beta-lactamase family.

It catalyses the reaction a beta-lactam + H2O = a substituted beta-amino acid. Hydrolyzes carbapenems such as imipenem, which are extended-spectrum beta-lactam antibiotics. This is Imipenem-hydrolyzing beta-lactamase (nmcA) from Enterobacter cloacae.